The following is a 337-amino-acid chain: Trace amine-associated receptor 5 (337 aa).

Residues 1 to 38 are Extracellular-facing; sequence MRAVLLPGSGEQPTAFCYQVNGSCPRTVHPLAIQVVIY. N21 carries an N-linked (GlcNAc...) asparagine glycan. 2 cysteine pairs are disulfide-bonded: C24–C188 and C99–C192. The helical transmembrane segment at 39 to 59 threads the bilayer; the sequence is LACAVGVLITVLGNLFVVFAV. Topologically, residues 60-70 are cytoplasmic; sequence SYFKVLHTPTN. A helical transmembrane segment spans residues 71–91; sequence FLLLSLALADMLLGLLVLPLS. The Extracellular segment spans residues 92–109; that stretch reads TVRSVESCWFFGDFLCRL. The helical transmembrane segment at 110–130 threads the bilayer; it reads HTYLDTLFCLTSIFHLCFISI. At 131-154 the chain is on the cytoplasmic side; it reads DRHCAICDPLLYPSKFTVRTALRY. A helical transmembrane segment spans residues 155 to 175; the sequence is IVAGWGIPAAYTAFFLYTDVV. The segment at 176 to 189 is extracellular Loop 2 (ECL2); the sequence is ERALSQWLEEMPCV. Residues 176–204 are Extracellular-facing; it reads ERALSQWLEEMPCVGSCQLLFNKFWGWLN. Residues 205–225 traverse the membrane as a helical segment; it reads FPAFFVPCLIMISLYLKIFVV. The Cytoplasmic segment spans residues 226–253; it reads ATRQAQQIRTLSQSLAGAVKRERKAAKT. Residues 254 to 274 form a helical membrane-spanning segment; it reads LGIAVGIYLVCWLPFTVDTLV. The Extracellular portion of the chain corresponds to 275-284; it reads DSLLNFITPP. Residues 285-307 form a helical membrane-spanning segment; the sequence is LVFDIFIWFAYFNSACNPIIYVF. Residues 308–337 are Cytoplasmic-facing; that stretch reads SYRWFRKALKLLLSREIFSPRTPTVDLYHD.

It belongs to the G-protein coupled receptor 1 family. Specifically expressed in neurons of the olfactory epithelium, to discrete glomeruli predominantly localized to a confined bulb region. Present in the dorsal area of the main olfactory epithelium. Also present in the limbic brain areas receiving projection from the olfactory system and involved in the regulation of emotions. Also expressed in some brain regions outside the olfactory epithelium, such as the hippocampus, cerebellum, cortex, raphe nuclei, hypothalamus, and habenula.

It localises to the cell membrane. Inhibited by 1-[(5,5- diphenyloxolan-2-yl)methyl]-4-(2-methoxyphenyl)piperazine and N-[(2,2-diphenyl-1,3-dioxolan-4-yl)methyl]-2-(2- methoxyphenoxy)ethan-1-amine small molecules. Functionally, olfactory receptor specific for trimethylamine, a trace amine enriched in the urine of male mice, playing a role in social behavior. Also activated by N-methylpiperidine. Trimethylamine is present at high concentration in the urine of male mice after puberty and acts as an attractant. Trimethylamine-binding causes a conformation change that triggers signaling via G(s)-class of G alpha proteins (GNAL or GNAS). Also required to provide olfactory input into limbic brain areas to regulate emotional behaviors likely via modulation of the serotonin system. The chain is Trace amine-associated receptor 5 from Mus musculus (Mouse).